Consider the following 179-residue polypeptide: NADH-quinone oxidoreductase subunit B (179 aa).

[4Fe-4S] cluster contacts are provided by cysteine 53, cysteine 54, cysteine 118, and cysteine 148.

It belongs to the complex I 20 kDa subunit family. In terms of assembly, NDH-1 is composed of 14 different subunits. Subunits NuoB, C, D, E, F, and G constitute the peripheral sector of the complex. It depends on [4Fe-4S] cluster as a cofactor.

Its subcellular location is the cell membrane. It carries out the reaction a quinone + NADH + 5 H(+)(in) = a quinol + NAD(+) + 4 H(+)(out). In terms of biological role, NDH-1 shuttles electrons from NADH, via FMN and iron-sulfur (Fe-S) centers, to quinones in the respiratory chain. The immediate electron acceptor for the enzyme in this species is believed to be a menaquinone. Couples the redox reaction to proton translocation (for every two electrons transferred, four hydrogen ions are translocated across the cytoplasmic membrane), and thus conserves the redox energy in a proton gradient. The sequence is that of NADH-quinone oxidoreductase subunit B from Bacillus thuringiensis (strain Al Hakam).